The chain runs to 235 residues: LexA repressor (235 aa).

The segment at residues 26-46 (FDEMKDALDLKSKSGIHRLIT) is a DNA-binding region (H-T-H motif). Residues S156 and K194 each act as for autocatalytic cleavage activity in the active site.

This sequence belongs to the peptidase S24 family. As to quaternary structure, homodimer.

It carries out the reaction Hydrolysis of Ala-|-Gly bond in repressor LexA.. Represses a number of genes involved in the response to DNA damage (SOS response), including recA and lexA. In the presence of single-stranded DNA, RecA interacts with LexA causing an autocatalytic cleavage which disrupts the DNA-binding part of LexA, leading to derepression of the SOS regulon and eventually DNA repair. The chain is LexA repressor from Paramagnetospirillum magneticum (strain ATCC 700264 / AMB-1) (Magnetospirillum magneticum).